A 310-amino-acid chain; its full sequence is tRNA dimethylallyltransferase (310 aa).

Residue 14–21 coordinates ATP; it reads GPTASGKS. 16–21 lines the substrate pocket; sequence TASGKS. Interaction with substrate tRNA stretches follow at residues 39–42 and 163–167; these read DSMQ and QRIVR.

Belongs to the IPP transferase family. As to quaternary structure, monomer. Mg(2+) serves as cofactor.

It carries out the reaction adenosine(37) in tRNA + dimethylallyl diphosphate = N(6)-dimethylallyladenosine(37) in tRNA + diphosphate. In terms of biological role, catalyzes the transfer of a dimethylallyl group onto the adenine at position 37 in tRNAs that read codons beginning with uridine, leading to the formation of N6-(dimethylallyl)adenosine (i(6)A). This Brucella abortus (strain S19) protein is tRNA dimethylallyltransferase.